The following is a 204-amino-acid chain: Leucyl/phenylalanyl-tRNA--protein transferase (204 aa).

It belongs to the L/F-transferase family.

Its subcellular location is the cytoplasm. The catalysed reaction is N-terminal L-lysyl-[protein] + L-leucyl-tRNA(Leu) = N-terminal L-leucyl-L-lysyl-[protein] + tRNA(Leu) + H(+). The enzyme catalyses N-terminal L-arginyl-[protein] + L-leucyl-tRNA(Leu) = N-terminal L-leucyl-L-arginyl-[protein] + tRNA(Leu) + H(+). It catalyses the reaction L-phenylalanyl-tRNA(Phe) + an N-terminal L-alpha-aminoacyl-[protein] = an N-terminal L-phenylalanyl-L-alpha-aminoacyl-[protein] + tRNA(Phe). Functions in the N-end rule pathway of protein degradation where it conjugates Leu, Phe and, less efficiently, Met from aminoacyl-tRNAs to the N-termini of proteins containing an N-terminal arginine or lysine. In Sinorhizobium fredii (strain NBRC 101917 / NGR234), this protein is Leucyl/phenylalanyl-tRNA--protein transferase.